The primary structure comprises 156 residues: Pilin-like protein PilA1 (156 aa).

The propeptide at 1-5 (MTRRG) is leader sequence. At Leu-6 the chain carries N-methylleucine. Residues 6 to 29 (LTLLELLLVLGILGVLLGLALPLL) traverse the membrane as a helical segment.

It is found in the cell inner membrane. It localises to the cell outer membrane. Its subcellular location is the periplasm. Functionally, plays an essential role in natural DNA transformation but is not required for pilus biogenesis. This is Pilin-like protein PilA1 (pilA1) from Thermus thermophilus (strain ATCC BAA-163 / DSM 7039 / HB27).